A 238-amino-acid chain; its full sequence is Ribitol-5-phosphate cytidylyltransferase (238 aa).

Residues 7-10 (FAGG) and 80-86 (GETGQES) contribute to the CTP site.

It belongs to the IspD/TarI cytidylyltransferase family. TarI subfamily.

It catalyses the reaction D-ribitol 5-phosphate + CTP + H(+) = CDP-L-ribitol + diphosphate. Its function is as follows. Catalyzes the transfer of the cytidylyl group of CTP to D-ribitol 5-phosphate. The sequence is that of Ribitol-5-phosphate cytidylyltransferase from Vibrio parahaemolyticus serotype O3:K6 (strain RIMD 2210633).